Consider the following 1119-residue polypeptide: Protein translocase subunit SecA (1119 aa).

ATP-binding positions include Gln175, 213–217 (GEGKT), and Asp714. Zn(2+) contacts are provided by Cys1106, Cys1108, Cys1117, and Cys1118.

The protein belongs to the SecA family. As to quaternary structure, monomer and homodimer. Part of the essential Sec protein translocation apparatus which comprises SecA, SecYEG and auxiliary proteins SecDF. Other proteins may also be involved. It depends on Zn(2+) as a cofactor.

The protein localises to the cell inner membrane. It is found in the cytoplasm. The catalysed reaction is ATP + H2O + cellular proteinSide 1 = ADP + phosphate + cellular proteinSide 2.. Part of the Sec protein translocase complex. Interacts with the SecYEG preprotein conducting channel. Has a central role in coupling the hydrolysis of ATP to the transfer of proteins into and across the cell membrane, serving as an ATP-driven molecular motor driving the stepwise translocation of polypeptide chains across the membrane. The protein is Protein translocase subunit SecA of Azobacteroides pseudotrichonymphae genomovar. CFP2.